The sequence spans 402 residues: Dynactin subunit 2 (402 aa).

The segment at 1–26 is disordered; that stretch reads MADPKYADLPGIARNEPDVYETSDLP. 2 coiled-coil regions span residues 101 to 132 and 357 to 402; these read PQQR…SAAE and VHLD…KRLQ.

This sequence belongs to the dynactin subunit 2 family. In terms of assembly, subunit of dynactin, a multiprotein complex part of a tripartite complex with dynein and a adapter, such as BICDL1, BICD2 or HOOK3. The dynactin complex is built around ACTR1A/ACTB filament and consists of an actin-related filament composed of a shoulder domain, a pointed end and a barbed end. Its length is defined by its flexible shoulder domain. The soulder is composed of 2 DCTN1 subunits, 4 DCTN2 and 2 DCTN3.

The protein localises to the cytoplasm. It localises to the cytoskeleton. It is found in the microtubule organizing center. Its subcellular location is the centrosome. The protein resides in the membrane. Functionally, part of the dynactin complex that activates the molecular motor dynein for ultra-processive transport along microtubules. In the dynactin soulder domain, binds the ACTR1A filament and acts as a molecular ruler to determine the length. Modulates cytoplasmic dynein binding to an organelle, and plays a role in prometaphase chromosome alignment and spindle organization during mitosis. Involved in anchoring microtubules to centrosomes. This Gallus gallus (Chicken) protein is Dynactin subunit 2 (DCTN2).